A 395-amino-acid chain; its full sequence is Elongation factor Tu (395 aa).

The region spanning 10-204 (KPHVNIGTIG…VVDEYIPTPV (195 aa)) is the tr-type G domain. The tract at residues 19–26 (GHVDHGKT) is G1. Residue 19-26 (GHVDHGKT) coordinates GTP. Thr-26 serves as a coordination point for Mg(2+). The segment at 60–64 (GITIN) is G2. The interval 81–84 (DAPG) is G3. Residues 81 to 85 (DAPGH) and 136 to 139 (NKTD) contribute to the GTP site. The tract at residues 136 to 139 (NKTD) is G4. Positions 174–176 (SAL) are G5.

This sequence belongs to the TRAFAC class translation factor GTPase superfamily. Classic translation factor GTPase family. EF-Tu/EF-1A subfamily. As to quaternary structure, monomer.

The protein localises to the cytoplasm. The catalysed reaction is GTP + H2O = GDP + phosphate + H(+). Its function is as follows. GTP hydrolase that promotes the GTP-dependent binding of aminoacyl-tRNA to the A-site of ribosomes during protein biosynthesis. The chain is Elongation factor Tu from Lactiplantibacillus plantarum (strain ATCC BAA-793 / NCIMB 8826 / WCFS1) (Lactobacillus plantarum).